The following is a 282-amino-acid chain: S-formylglutathione hydrolase (282 aa).

K4 is subject to N6-succinyllysine. S149 serves as the catalytic Charge relay system. K200 is subject to N6-acetyllysine. Catalysis depends on charge relay system residues D226 and H260.

This sequence belongs to the esterase D family. In terms of assembly, homodimer.

The protein localises to the cytoplasm. The protein resides in the cytoplasmic vesicle. It catalyses the reaction S-formylglutathione + H2O = formate + glutathione + H(+). Its function is as follows. Serine hydrolase involved in the detoxification of formaldehyde. The chain is S-formylglutathione hydrolase (Esd) from Rattus norvegicus (Rat).